We begin with the raw amino-acid sequence, 219 residues long: Mitochondrial fission factor homolog A (219 aa).

Residues 1–199 are Cytoplasmic-facing; the sequence is MAEINRMQYE…ENKERVKHEM (199 aa). A coiled-coil region spans residues 164-194; it reads DLALADAASLRRQIIKLNRRLLLLEEENKER. Residues 200-217 form a helical; Anchor for type IV membrane protein membrane-spanning segment; it reads TMYSIIIIFGLLNSWLWL. The Extracellular portion of the chain corresponds to 218 to 219; sequence RR.

It belongs to the Tango11 family.

Its subcellular location is the mitochondrion outer membrane. It is found in the peroxisome. It localises to the cytoplasmic vesicle. The protein localises to the secretory vesicle. The protein resides in the synaptic vesicle. In terms of biological role, plays a role in mitochondrial and peroxisomal fission. Promotes the recruitment and association of the fission mediator dynamin-related protein 1 (DNM1L) to the mitochondrial surface. This Xenopus laevis (African clawed frog) protein is Mitochondrial fission factor homolog A (mff-a).